Consider the following 646-residue polypeptide: Rho guanine nucleotide exchange factor 7 (646 aa).

Residues 6-65 enclose the SH3 domain; sequence NSQLVVRAKFNFQQTNEDELSFSKGDVIHVTRVEEGGWWEGTHNGRTGWFPSNYVREIKP. Ser-7, Ser-71, and Ser-79 each carry phosphoserine. The 181-residue stretch at 93 to 273 folds into the DH domain; that stretch reads YYNVVLQNIL…KNLSAQCQEV (181 aa). Residues 295–400 form the PH domain; the sequence is DIKTLGSVTY…WVEHLQRQTK (106 aa). Ser-340 is modified (phosphoserine). Disordered stretches follow at residues 402–464 and 500–520; these read TSVS…GPLE and KTMKKLLPKRKPERKPSDEEF. Positions 415-428 are enriched in polar residues; that stretch reads PSHTLPSHPLTPSS. Residues 500–512 show a composition bias toward basic residues; that stretch reads KTMKKLLPKRKPE. A phosphoserine mark is found at Ser-516 and Ser-560.

Interacts with SCRIB; interaction is direct and may play a role in regulation of apoptosis. Interacts with PAK kinases through the SH3 domain. Interacts with GIT1 and probably TGFB1I1. Interacts with ITCH and PARVB. Interacts with FRMPD4 (via N-terminus). Interacts with CaMK1. Interacts with PTK2/FAK1 and RAC1. Interacts with BIN2. Interacts with YWHAZ. Interacts (via PH domain) with NOX1 (via FAD-binding FR-type domain). In terms of processing, phosphorylated on Ser-516 by CaMK1; enhancement of GEF activity and downstream activation of RAC1. Phosphorylated by PTK2/FAK1; this promotes interaction with RAC1.

It is found in the cell junction. The protein localises to the focal adhesion. The protein resides in the cell projection. Its subcellular location is the ruffle. It localises to the cytoplasm. It is found in the cell cortex. The protein localises to the lamellipodium. Functionally, acts as a RAC1 guanine nucleotide exchange factor (GEF) and can induce membrane ruffling. Functions in cell migration, attachment and cell spreading. Promotes targeting of RAC1 to focal adhesions. May function as a positive regulator of apoptosis. Downstream of NMDA receptors and CaMKK-CaMK1 signaling cascade, promotes the formation of spines and synapses in hippocampal neurons. In Rattus norvegicus (Rat), this protein is Rho guanine nucleotide exchange factor 7 (Arhgef7).